A 178-amino-acid polypeptide reads, in one-letter code: Crossover junction endodeoxyribonuclease RuvC (178 aa).

Catalysis depends on residues Asp-20, Glu-80, and Asp-154. Residues Asp-20, Glu-80, and Asp-154 each coordinate Mg(2+).

This sequence belongs to the RuvC family. As to quaternary structure, homodimer which binds Holliday junction (HJ) DNA. The HJ becomes 2-fold symmetrical on binding to RuvC with unstacked arms; it has a different conformation from HJ DNA in complex with RuvA. In the full resolvosome a probable DNA-RuvA(4)-RuvB(12)-RuvC(2) complex forms which resolves the HJ. Mg(2+) serves as cofactor.

The protein localises to the cytoplasm. The enzyme catalyses Endonucleolytic cleavage at a junction such as a reciprocal single-stranded crossover between two homologous DNA duplexes (Holliday junction).. The RuvA-RuvB-RuvC complex processes Holliday junction (HJ) DNA during genetic recombination and DNA repair. Endonuclease that resolves HJ intermediates. Cleaves cruciform DNA by making single-stranded nicks across the HJ at symmetrical positions within the homologous arms, yielding a 5'-phosphate and a 3'-hydroxyl group; requires a central core of homology in the junction. The consensus cleavage sequence is 5'-(A/T)TT(C/G)-3'. Cleavage occurs on the 3'-side of the TT dinucleotide at the point of strand exchange. HJ branch migration catalyzed by RuvA-RuvB allows RuvC to scan DNA until it finds its consensus sequence, where it cleaves and resolves the cruciform DNA. This Rhodopirellula baltica (strain DSM 10527 / NCIMB 13988 / SH1) protein is Crossover junction endodeoxyribonuclease RuvC.